The chain runs to 130 residues: Iron-sulfur cluster insertion protein ErpA 2 (130 aa).

Iron-sulfur cluster is bound by residues cysteine 58, cysteine 122, and cysteine 124.

The protein belongs to the HesB/IscA family. In terms of assembly, homodimer. Requires iron-sulfur cluster as cofactor.

Functionally, required for insertion of 4Fe-4S clusters for at least IspG. This chain is Iron-sulfur cluster insertion protein ErpA 2, found in Methylococcus capsulatus (strain ATCC 33009 / NCIMB 11132 / Bath).